Here is a 227-residue protein sequence, read N- to C-terminus: Ribose-5-phosphate isomerase A (227 aa).

Substrate is bound by residues 26–29 (TGST), 82–85 (DGAD), and 95–98 (KGGG). The active-site Proton acceptor is the E104. K122 lines the substrate pocket.

Belongs to the ribose 5-phosphate isomerase family. As to quaternary structure, homodimer.

It carries out the reaction aldehydo-D-ribose 5-phosphate = D-ribulose 5-phosphate. The protein operates within carbohydrate degradation; pentose phosphate pathway; D-ribose 5-phosphate from D-ribulose 5-phosphate (non-oxidative stage): step 1/1. In terms of biological role, catalyzes the reversible conversion of ribose-5-phosphate to ribulose 5-phosphate. This is Ribose-5-phosphate isomerase A from Streptococcus equi subsp. equi (strain 4047).